The chain runs to 94 residues: Small ribosomal subunit protein bS18 (94 aa).

Belongs to the bacterial ribosomal protein bS18 family. In terms of assembly, part of the 30S ribosomal subunit. Forms a tight heterodimer with protein bS6.

Binds as a heterodimer with protein bS6 to the central domain of the 16S rRNA, where it helps stabilize the platform of the 30S subunit. This Albidiferax ferrireducens (strain ATCC BAA-621 / DSM 15236 / T118) (Rhodoferax ferrireducens) protein is Small ribosomal subunit protein bS18.